Here is a 408-residue protein sequence, read N- to C-terminus: Phosphopentomutase (408 aa).

The Mn(2+) site is built by Asp10, Asp307, His312, Asp348, His349, and His360.

It belongs to the phosphopentomutase family. Mn(2+) is required as a cofactor.

Its subcellular location is the cytoplasm. It carries out the reaction 2-deoxy-alpha-D-ribose 1-phosphate = 2-deoxy-D-ribose 5-phosphate. It catalyses the reaction alpha-D-ribose 1-phosphate = D-ribose 5-phosphate. It functions in the pathway carbohydrate degradation; 2-deoxy-D-ribose 1-phosphate degradation; D-glyceraldehyde 3-phosphate and acetaldehyde from 2-deoxy-alpha-D-ribose 1-phosphate: step 1/2. Isomerase that catalyzes the conversion of deoxy-ribose 1-phosphate (dRib-1-P) and ribose 1-phosphate (Rib-1-P) to deoxy-ribose 5-phosphate (dRib-5-P) and ribose 5-phosphate (Rib-5-P), respectively. In Buchnera aphidicola subsp. Baizongia pistaciae (strain Bp), this protein is Phosphopentomutase.